The primary structure comprises 51 residues: Small ribosomal subunit protein uS13 (51 aa).

Belongs to the universal ribosomal protein uS13 family. In terms of assembly, part of the 30S ribosomal subunit. Forms a loose heterodimer with protein S19. Forms two bridges to the 50S subunit in the 70S ribosome.

Functionally, located at the top of the head of the 30S subunit, it contacts several helices of the 16S rRNA. In the 70S ribosome it contacts the 23S rRNA (bridge B1a) and protein L5 of the 50S subunit (bridge B1b), connecting the 2 subunits; these bridges are implicated in subunit movement. Contacts the tRNAs in the A and P-sites. The chain is Small ribosomal subunit protein uS13 (rpsM) from Lactococcus lactis subsp. cremoris (Streptococcus cremoris).